The chain runs to 245 residues: uncharacterized protein (245 aa).

This is an uncharacterized protein from Mycobacterium tuberculosis (strain CDC 1551 / Oshkosh).